Reading from the N-terminus, the 256-residue chain is Type III pantothenate kinase (256 aa).

An ATP-binding site is contributed by 6 to 13 (DAGNSRIK). Substrate contacts are provided by residues Tyr90 and 97–100 (GSDR). Asp99 (proton acceptor) is an active-site residue. Thr123 contacts ATP. Thr187 serves as a coordination point for substrate.

It belongs to the type III pantothenate kinase family. Homodimer. Requires NH4(+) as cofactor. The cofactor is K(+).

The protein localises to the cytoplasm. The catalysed reaction is (R)-pantothenate + ATP = (R)-4'-phosphopantothenate + ADP + H(+). It functions in the pathway cofactor biosynthesis; coenzyme A biosynthesis; CoA from (R)-pantothenate: step 1/5. Functionally, catalyzes the phosphorylation of pantothenate (Pan), the first step in CoA biosynthesis. This is Type III pantothenate kinase from Burkholderia mallei (strain NCTC 10247).